The primary structure comprises 441 residues: Coiled-coil domain-containing protein 91 (441 aa).

Residues 1 to 16 (MDDDDFGGFEAAETFD) form a GGA1-binding motif region. Positions 1–26 (MDDDDFGGFEAAETFDGGSGETQTTS) are disordered. S43 and S46 each carry phosphoserine. Coiled coils occupy residues 130-209 (SNIQ…GHEA) and 249-407 (ELLN…KRLD). Residues 210 to 413 (LSIIVDEYKA…KRLDQVIRQR (204 aa)) form a homodimerization region.

In terms of assembly, homodimer. Interacts with GGA1, GGA2 and AP1G1. As to expression, widely expressed.

Its subcellular location is the membrane. The protein resides in the golgi apparatus. It is found in the trans-Golgi network membrane. It localises to the trans-Golgi network. In terms of biological role, involved in the regulation of membrane traffic through the trans-Golgi network (TGN). Functions in close cooperation with the GGAs in the sorting of hydrolases to lysosomes. The polypeptide is Coiled-coil domain-containing protein 91 (CCDC91) (Homo sapiens (Human)).